The chain runs to 225 residues: Uridylate kinase (225 aa).

An ATP-binding site is contributed by 9-10 (GS). G46 is a UMP binding site. ATP is bound by residues G47 and R51. UMP contacts are provided by residues D67 and 115–121 (THPAHTT). The ATP site is built by T141, N142, Y147, and D150.

It belongs to the UMP kinase family. As to quaternary structure, homohexamer.

The protein localises to the cytoplasm. It carries out the reaction UMP + ATP = UDP + ADP. The protein operates within pyrimidine metabolism; CTP biosynthesis via de novo pathway; UDP from UMP (UMPK route): step 1/1. With respect to regulation, inhibited by UTP. Catalyzes the reversible phosphorylation of UMP to UDP. This Methanococcus maripaludis (strain C5 / ATCC BAA-1333) protein is Uridylate kinase.